Here is a 206-residue protein sequence, read N- to C-terminus: Small ribosomal subunit protein uS4 (206 aa).

The 61-residue stretch at Thr96–Lys156 folds into the S4 RNA-binding domain.

The protein belongs to the universal ribosomal protein uS4 family. Part of the 30S ribosomal subunit. Contacts protein S5. The interaction surface between S4 and S5 is involved in control of translational fidelity.

Functionally, one of the primary rRNA binding proteins, it binds directly to 16S rRNA where it nucleates assembly of the body of the 30S subunit. In terms of biological role, with S5 and S12 plays an important role in translational accuracy. The polypeptide is Small ribosomal subunit protein uS4 (Shewanella loihica (strain ATCC BAA-1088 / PV-4)).